Consider the following 126-residue polypeptide: Large ribosomal subunit protein uL22 (126 aa).

The protein belongs to the universal ribosomal protein uL22 family. In terms of assembly, part of the 50S ribosomal subunit.

This protein binds specifically to 23S rRNA; its binding is stimulated by other ribosomal proteins, e.g. L4, L17, and L20. It is important during the early stages of 50S assembly. It makes multiple contacts with different domains of the 23S rRNA in the assembled 50S subunit and ribosome. In terms of biological role, the globular domain of the protein is located near the polypeptide exit tunnel on the outside of the subunit, while an extended beta-hairpin is found that lines the wall of the exit tunnel in the center of the 70S ribosome. This chain is Large ribosomal subunit protein uL22, found in Maricaulis maris (strain MCS10) (Caulobacter maris).